The following is a 604-amino-acid chain: Glucose oxidase (604 aa).

The first 18 residues, 1-18, serve as a signal peptide directing secretion; it reads MKSTIITSILFSVATVQA. Residues leucine 52, threonine 53, and glutamate 73 each contribute to the FAD site. N-linked (GlcNAc...) asparagine glycosylation is present at asparagine 111. FAD is bound by residues serine 125, asparagine 129, glycine 130, and serine 132. An intrachain disulfide couples cysteine 186 to cysteine 228. Asparagine 213 is a glycosylation site (N-linked (GlcNAc...) asparagine). Residue valine 272 coordinates FAD. 3 N-linked (GlcNAc...) asparagine glycosylation sites follow: asparagine 278, asparagine 409, and asparagine 531. Histidine 537 serves as the catalytic Proton acceptor. Positions 558 and 559 each coordinate O2. Residues glycine 570 and methionine 582 each contribute to the FAD site.

This sequence belongs to the GMC oxidoreductase family. Homodimer. It depends on FAD as a cofactor.

The protein resides in the secreted. It localises to the cell wall. The protein localises to the cytoplasm. Its subcellular location is the extracellular space. It is found in the extracellular matrix. The catalysed reaction is beta-D-glucose + O2 = D-glucono-1,5-lactone + H2O2. Its function is as follows. Glucose oxidase catalyzes the oxidation of beta-D-glucose to D-glucono-delta-lactone and hydrogen peroxide in the presence of molecular oxygen. The enzyme also catalyzes the reaction with D-xylose but at a much lower rate. Shows any activities against D-fructose, D-galactose and D-arabinose. The enzyme is cytotoxic for a series of bacteria, yeasts and filamentous fungi and acts primarily via the liberation of H(2)O(2), which is a harmful oxidative stress-generating agent. The chain is Glucose oxidase from Penicillium chrysogenum (Penicillium notatum).